The chain runs to 172 residues: Ribosome maturation factor RimM (172 aa).

A PRC barrel domain is found at 95–168; it reads DEGEFYYHQI…RVDVAIMEGL (74 aa).

It belongs to the RimM family. As to quaternary structure, binds ribosomal protein uS19.

The protein localises to the cytoplasm. An accessory protein needed during the final step in the assembly of 30S ribosomal subunit, possibly for assembly of the head region. Essential for efficient processing of 16S rRNA. May be needed both before and after RbfA during the maturation of 16S rRNA. It has affinity for free ribosomal 30S subunits but not for 70S ribosomes. The polypeptide is Ribosome maturation factor RimM (Streptococcus uberis (strain ATCC BAA-854 / 0140J)).